The chain runs to 383 residues: tRNA-specific 2-thiouridylase MnmA (383 aa).

ATP is bound by residues 11–18 and M37; that span reads GLSGGVDS. Residues 97-99 are interaction with target base in tRNA; the sequence is NPD. C102 functions as the Nucleophile in the catalytic mechanism. Cysteines 102 and 200 form a disulfide. G127 contacts ATP. The segment at 150–152 is interaction with tRNA; that stretch reads KDQ. The Cysteine persulfide intermediate role is filled by C200. The tract at residues 312 to 313 is interaction with tRNA; that stretch reads RY. Positions 361–383 are disordered; sequence IDTAHPADRSAPPALQTQSTEVV.

Belongs to the MnmA/TRMU family.

The protein resides in the cytoplasm. It catalyses the reaction S-sulfanyl-L-cysteinyl-[protein] + uridine(34) in tRNA + AH2 + ATP = 2-thiouridine(34) in tRNA + L-cysteinyl-[protein] + A + AMP + diphosphate + H(+). In terms of biological role, catalyzes the 2-thiolation of uridine at the wobble position (U34) of tRNA, leading to the formation of s(2)U34. This chain is tRNA-specific 2-thiouridylase MnmA, found in Halorhodospira halophila (strain DSM 244 / SL1) (Ectothiorhodospira halophila (strain DSM 244 / SL1)).